Consider the following 212-residue polypeptide: Pyridoxine/pyridoxamine 5'-phosphate oxidase (212 aa).

FMN contacts are provided by residues 59–64 (RMVLMK), 74–75 (YS), Lys-81, and Gln-103. Lys-64 contributes to the substrate binding site. Positions 121 and 125 each coordinate substrate. FMN is bound by residues 138–139 (QS) and Trp-183. 189–191 (RLH) provides a ligand contact to substrate. Arg-193 provides a ligand contact to FMN.

It belongs to the pyridoxamine 5'-phosphate oxidase family. Homodimer. FMN is required as a cofactor.

The catalysed reaction is pyridoxamine 5'-phosphate + O2 + H2O = pyridoxal 5'-phosphate + H2O2 + NH4(+). It carries out the reaction pyridoxine 5'-phosphate + O2 = pyridoxal 5'-phosphate + H2O2. Its pathway is cofactor metabolism; pyridoxal 5'-phosphate salvage; pyridoxal 5'-phosphate from pyridoxamine 5'-phosphate: step 1/1. It functions in the pathway cofactor metabolism; pyridoxal 5'-phosphate salvage; pyridoxal 5'-phosphate from pyridoxine 5'-phosphate: step 1/1. Functionally, catalyzes the oxidation of either pyridoxine 5'-phosphate (PNP) or pyridoxamine 5'-phosphate (PMP) into pyridoxal 5'-phosphate (PLP). The chain is Pyridoxine/pyridoxamine 5'-phosphate oxidase from Rhodopseudomonas palustris (strain TIE-1).